A 127-amino-acid polypeptide reads, in one-letter code: Large ribosomal subunit protein bL19 (127 aa).

This sequence belongs to the bacterial ribosomal protein bL19 family.

In terms of biological role, this protein is located at the 30S-50S ribosomal subunit interface and may play a role in the structure and function of the aminoacyl-tRNA binding site. The chain is Large ribosomal subunit protein bL19 from Roseobacter denitrificans (strain ATCC 33942 / OCh 114) (Erythrobacter sp. (strain OCh 114)).